The primary structure comprises 118 residues: Basic phospholipase A2 PA-11 (118 aa).

7 cysteine pairs are disulfide-bonded: C11–C71, C27–C117, C29–C45, C44–C98, C51–C91, C60–C84, and C78–C89. Y28, G30, and G32 together coordinate Ca(2+). The active site involves H48. D49 contacts Ca(2+). The active site involves D92.

It belongs to the phospholipase A2 family. Group I subfamily. D49 sub-subfamily. Requires Ca(2+) as cofactor. Expressed by the venom gland.

The protein localises to the secreted. It carries out the reaction a 1,2-diacyl-sn-glycero-3-phosphocholine + H2O = a 1-acyl-sn-glycero-3-phosphocholine + a fatty acid + H(+). Functionally, PLA2 catalyzes the calcium-dependent hydrolysis of the 2-acyl groups in 3-sn-phosphoglycerides. This chain is Basic phospholipase A2 PA-11, found in Pseudechis australis (Mulga snake).